The primary structure comprises 444 residues: tRNA modification GTPase MnmE (444 aa).

(6S)-5-formyl-5,6,7,8-tetrahydrofolate-binding residues include Arg25, Glu83, and Lys122. The TrmE-type G domain maps to 218 to 370; sequence GFKVAIVGKP…IVGRLRDYLD (153 aa). GTP is bound by residues 228 to 233, 247 to 253, and 272 to 275; these read NVGKSS, SDEAGTT, and DTAG. Residues Ser232 and Thr253 each coordinate Mg(2+). Lys444 contacts (6S)-5-formyl-5,6,7,8-tetrahydrofolate.

The protein belongs to the TRAFAC class TrmE-Era-EngA-EngB-Septin-like GTPase superfamily. TrmE GTPase family. As to quaternary structure, homodimer. Heterotetramer of two MnmE and two MnmG subunits. K(+) is required as a cofactor.

The protein resides in the cytoplasm. Its function is as follows. Exhibits a very high intrinsic GTPase hydrolysis rate. Involved in the addition of a carboxymethylaminomethyl (cmnm) group at the wobble position (U34) of certain tRNAs, forming tRNA-cmnm(5)s(2)U34. The polypeptide is tRNA modification GTPase MnmE (Campylobacter curvus (strain 525.92)).